Consider the following 188-residue polypeptide: Small ribosomal subunit protein bS18c (188 aa).

The span at 1–19 (MNNQSFNNFSQVNSNSSFF) shows a compositional bias: low complexity. The segment at 1–79 (MNNQSFNNFS…TSNKRKVLSV (79 aa)) is disordered. The segment covering 25-71 (NLQNTNLEMTNGTNPPSSFSKQTPQKRQSFGTNTNFSKGNSSRGSTS) has biased composition (polar residues).

The protein belongs to the bacterial ribosomal protein bS18 family. In terms of assembly, part of the 30S ribosomal subunit.

It localises to the plastid. The protein resides in the chloroplast. The chain is Small ribosomal subunit protein bS18c from Tetradesmus obliquus (Green alga).